The chain runs to 337 residues: CMP-N-acetylneuraminate-beta-galactosamide-alpha-2,3-sialyltransferase 1 (337 aa).

The Cytoplasmic portion of the chain corresponds to 1-4 (MRRK). A helical; Signal-anchor for type II membrane protein transmembrane segment spans residues 5–25 (TLKYLTFFLLFIFLTSFVLNY). Over 26-337 (SNTGVPSAWF…INKIRIFKGR (312 aa)) the chain is Lumenal. 3 cysteine pairs are disulfide-bonded: cysteine 56/cysteine 61, cysteine 58/cysteine 136, and cysteine 139/cysteine 278. Asparagine 76 carries N-linked (GlcNAc...) asparagine glycosylation. Glutamine 102 lines the substrate pocket. N-linked (GlcNAc...) asparagine glycosylation is present at asparagine 109. Residues asparagine 144, asparagine 167, tyrosine 227, tyrosine 263, glycine 267, glycine 287, histidine 296, and histidine 313 each coordinate substrate. Asparagine 320 carries an N-linked (GlcNAc...) asparagine glycan.

The protein belongs to the glycosyltransferase 29 family. Post-translationally, the soluble form derives from the membrane form by proteolytic processing. Highly expressed in submaxillary gland and to a much lesser extent in liver, lung, kidney, heart and brain.

Its subcellular location is the golgi apparatus. The protein resides in the golgi stack membrane. The protein localises to the trans-Golgi network membrane. It is found in the secreted. The enzyme catalyses a beta-D-galactosyl-(1-&gt;3)-N-acetyl-alpha-D-galactosaminyl derivative + CMP-N-acetyl-beta-neuraminate = an N-acetyl-alpha-neuraminyl-(2-&gt;3)-beta-D-galactosyl-(1-&gt;3)-N-acetyl-alpha-D-galactosaminyl derivative + CMP + H(+). It catalyses the reaction a ganglioside GM1 (d18:1(4E)) + CMP-N-acetyl-beta-neuraminate = a ganglioside GD1a (d18:1(4E)) + CMP + H(+). The catalysed reaction is ganglioside GM1 (d18:1(4E)/18:0) + CMP-N-acetyl-beta-neuraminate = ganglioside GD1a (18:1(4E)/18:0) + CMP + H(+). It carries out the reaction a ganglioside GA1 + CMP-N-acetyl-beta-neuraminate = a ganglioside GM1b + CMP + H(+). The enzyme catalyses a ganglioside GA1 (d18:1(4E)) + CMP-N-acetyl-beta-neuraminate = a ganglioside GM1b (d18:1(4E)) + CMP + H(+). It catalyses the reaction a ganglioside GD1b + CMP-N-acetyl-beta-neuraminate = a ganglioside GT1b + CMP + H(+). The catalysed reaction is a 3-O-[beta-D-galactosyl-(1-&gt;3)-N-acetyl-alpha-D-galactosaminyl]-L-threonyl-[protein] + CMP-N-acetyl-beta-neuraminate = a 3-O-[N-acetyl-alpha-neuraminyl-(2-&gt;3)-beta-D-galactosyl-(1-&gt;3)-N-acetyl-alpha-D-galactosaminyl]-L-threonyl-[protein] + CMP + H(+). It carries out the reaction a 3-O-[beta-D-galactosyl-(1-&gt;3)-N-acetyl-alpha-D-galactosaminyl]-L-seryl-[protein] + CMP-N-acetyl-beta-neuraminate = 3-O-[N-acetyl-alpha-neuraminyl-(2-&gt;3)-beta-D-galactosyl-(1-&gt;3)-N-acetyl-alpha-D-galactosaminyl]-L-seryl-[protein] + CMP + H(+). Its pathway is protein modification; protein glycosylation. It functions in the pathway glycolipid biosynthesis. In terms of biological role, a beta-galactoside alpha2-&gt;3 sialyltransferase involved in terminal sialylation of glycoproteins and glycolipids. Catalyzes the transfer of sialic acid (N-acetyl-neuraminic acid; Neu5Ac) from the nucleotide sugar donor CMP-Neu5Ac onto acceptor Galbeta-(1-&gt;3)-GalNAc-terminated glycoconjugates through an alpha2-3 linkage. Adds sialic acid to the core 1 O-glycan, Galbeta-(1-&gt;3)-GalNAc-O-Ser/Thr, which is a major structure of mucin-type O-glycans. As part of a homeostatic mechanism that regulates CD8-positive T cell numbers, sialylates core 1 O-glycans of T cell glycoproteins, SPN/CD43 and PTPRC/CD45. Prevents premature apoptosis of thymic CD8-positive T cells prior to peripheral emigration, whereas in the secondary lymphoid organs controls the survival of CD8-positive memory T cells generated following a successful immune response. Transfers sialic acid to asialofetuin, presumably onto Galbeta-(1-&gt;3)-GalNAc-O-Ser. Sialylates GM1a, GA1 and GD1b gangliosides to form GD1a, GM1b and GT1b, respectively. The sequence is that of CMP-N-acetylneuraminate-beta-galactosamide-alpha-2,3-sialyltransferase 1 (St3gal1) from Mus musculus (Mouse).